The primary structure comprises 220 residues: Charged multivesicular body protein 2a (220 aa).

Residues 12–53 (EEMLRQNQRALNRAMRDLDRERQRLEQQEKKIIADIKKMAKQ) adopt a coiled-coil conformation. The disordered stretch occupies residues 184–220 (ATGGSLSVAAGKKAEPQPTLADADADLEERLNNLRRD). The MIT-interacting motif signature appears at 208–218 (ADLEERLNNLR). Residues 211–220 (EERLNNLRRD) show a composition bias toward basic and acidic residues.

This sequence belongs to the SNF7 family. As to quaternary structure, probable core component of the endosomal sorting required for transport complex III (ESCRT-III). ESCRT-III components are thought to multimerize to form a flat lattice on the perimeter membrane of the endosome.

The protein resides in the late endosome membrane. It localises to the cytoplasm. In terms of biological role, probable core component of the endosomal sorting required for transport complex III (ESCRT-III) which is involved in multivesicular bodies (MVBs) formation and sorting of endosomal cargo proteins into MVBs. MVBs contain intraluminal vesicles (ILVs) that are generated by invagination and scission from the limiting membrane of the endosome and mostly are delivered to lysosomes enabling degradation of membrane proteins, such as stimulated growth factor receptors, lysosomal enzymes and lipids. The protein is Charged multivesicular body protein 2a (chmp2a) of Danio rerio (Zebrafish).